Here is a 776-residue protein sequence, read N- to C-terminus: Disintegrin and metalloproteinase domain-containing protein 28 (776 aa).

A signal peptide spans 1–19; that stretch reads MLQALLTVSLLLSPVPVSA. Residues 20-193 constitute a propeptide that is removed on maturation; sequence IKELPGVKKY…IARPATRLVK (174 aa). The short motif at 168 to 175 is the Cysteine switch element; it reads STCGTDGV. C170 contributes to the Zn(2+) binding site. The Extracellular portion of the chain corresponds to 194-666; that stretch reads LNDGKVQKHE…CDDSSVVFYF (473 aa). The Peptidase M12B domain occupies 204-400; sequence KYIEYYLVLD…KLSNCLFNAP (197 aa). N-linked (GlcNAc...) asparagine glycosylation is found at N268 and N275. 4 disulfides stabilise this stretch: C315–C395, C355–C379, C357–C362, and C466–C486. Residue H340 participates in Zn(2+) binding. Residue E341 is part of the active site. H344 and H350 together coordinate Zn(2+). N352 is a glycosylation site (N-linked (GlcNAc...) asparagine). One can recognise a Disintegrin domain in the interval 408-494; it reads TPICGNQMVE…NCPDDRFRAN (87 aa). N558, N603, and N629 each carry an N-linked (GlcNAc...) asparagine glycan. The 33-residue stretch at 626–658 folds into the EGF-like domain; the sequence is KSTNCSSKCKGHAVCDHELQCQCEEGWSPPDCD. 3 disulfides stabilise this stretch: C630/C640, C634/C646, and C648/C657. Residues 667 to 687 traverse the membrane as a helical segment; it reads SIVVAVLFPVAVISLVVAIVI. At 688–776 the chain is on the cytoplasmic side; the sequence is RQQSSREKQK…SSFLDSNPKA (89 aa). Residues 691 to 701 show a composition bias toward basic and acidic residues; it reads SSREKQKKDQR. Disordered stretches follow at residues 691–728 and 746–776; these read SSRE…PQEM and PASF…NPKA. The segment covering 709-718 has biased composition (basic residues); that stretch reads RPHKQKRKPQ.

Zn(2+) is required as a cofactor. In terms of processing, pro-domain removal and maturation may be, at least in part, autocatalytic. Expressed at high levels in epididymis and at lower levels in lung.

Its subcellular location is the membrane. May play a role in the adhesive and proteolytic events that occur during lymphocyte emigration or may function in ectodomain shedding of lymphocyte surface target proteins, such as FASL and CD40L. May be involved in sperm maturation. The sequence is that of Disintegrin and metalloproteinase domain-containing protein 28 (ADAM28) from Macaca fascicularis (Crab-eating macaque).